Reading from the N-terminus, the 359-residue chain is WAT1-related protein At5g64700 (359 aa).

10 consecutive transmembrane segments (helical) span residues 10 to 30 (LMVT…KAVF), 37 to 57 (FVFV…LAFF), 66 to 86 (LSFV…TLSL), 100 to 120 (LAAA…LLFG), 135 to 155 (LVGI…KGPL), 186 to 206 (WLKG…WLVL), 218 to 238 (LYFT…IAIA), 256 to 276 (AVIY…SWVI), 282 to 302 (VFLS…SAIL), and 306 to 326 (IISL…YCVL). 2 EamA domains span residues 18–136 (IYTI…AKLV) and 198–326 (ILWG…YCVL).

It belongs to the drug/metabolite transporter (DMT) superfamily. Plant drug/metabolite exporter (P-DME) (TC 2.A.7.4) family.

The protein resides in the membrane. This is WAT1-related protein At5g64700 from Arabidopsis thaliana (Mouse-ear cress).